Reading from the N-terminus, the 147-residue chain is Transmembrane protein 210 (147 aa).

Residues 1–31 form the signal peptide; sequence MAPGPWPVSCLRGGPLGLTYLSLLLIPAAAG. Residues 32-47 are Extracellular-facing; it reads TYCECSLGLSREALIA. The chain crosses the membrane as a helical span at residues 48 to 68; sequence LLVVLAGISASCFCALVIVAI. The Cytoplasmic segment spans residues 69–147; sequence GVLRAKGETC…PPPPPPLPPE (79 aa). A disordered region spans residues 128–147; it reads AIPMEASSEEPPPPPPLPPE. Residues 137 to 147 show a composition bias toward pro residues; sequence EPPPPPPLPPE.

The protein localises to the membrane. The protein resides in the cytoplasmic vesicle. It localises to the secretory vesicle. It is found in the acrosome. This chain is Transmembrane protein 210 (TMEM210), found in Homo sapiens (Human).